A 237-amino-acid chain; its full sequence is MGQKVHPNGIRLGITKPWNSTWFANTKDFADNLYSDFQVRQFLTKELKNASLSKITIERPAKSIRVTIHTARPGVVIGKKGEDVEKLRKAVAAIAGVPAQINISEVRKPELDGKLVADSITSQLERRVMFRRAMKRAVQNAMRLGAKGIKVEVSGRLGGAEIARTEWYREGRVPLHTLRADIDYATSEAHTTYGVIGVKVWIFKGEVLGGLAAVNAAAAQEQAPAKPKRDNKRRAAK.

The KH type-2 domain maps to 39 to 107; sequence VRQFLTKELK…PAQINISEVR (69 aa).

The protein belongs to the universal ribosomal protein uS3 family. In terms of assembly, part of the 30S ribosomal subunit. Forms a tight complex with proteins S10 and S14.

Its function is as follows. Binds the lower part of the 30S subunit head. Binds mRNA in the 70S ribosome, positioning it for translation. This chain is Small ribosomal subunit protein uS3, found in Aeromonas hydrophila subsp. hydrophila (strain ATCC 7966 / DSM 30187 / BCRC 13018 / CCUG 14551 / JCM 1027 / KCTC 2358 / NCIMB 9240 / NCTC 8049).